The chain runs to 101 residues: uncharacterized protein (101 aa).

May regulate the expression of phage structural components with protein P13. This is an uncharacterized protein from Pseudoalteromonas phage PM2 (Bacteriophage PM2).